Consider the following 552-residue polypeptide: Cilia- and flagella- associated protein 210 (552 aa).

Coiled-coil stretches lie at residues D53–Q143, E186–L307, I348–A409, and T460–K488. A disordered region spans residues K216–K238.

In terms of assembly, microtubule inner protein component of sperm flagellar doublet microtubules. As to expression, expressed in airway epithelial cells.

Its subcellular location is the cytoplasm. The protein localises to the cytoskeleton. The protein resides in the cilium axoneme. It localises to the flagellum axoneme. In terms of biological role, microtubule inner protein (MIP) part of the dynein-decorated doublet microtubules (DMTs) in cilia axoneme, which is required for motile cilia beating. The sequence is that of Cilia- and flagella- associated protein 210 from Homo sapiens (Human).